A 339-amino-acid chain; its full sequence is UDP-N-acetylenolpyruvoylglucosamine reductase (339 aa).

The 171-residue stretch at 19 to 189 folds into the FAD-binding PCMH-type domain; it reads VDVQARLFAE…LRVRFKLSRV (171 aa). Residue Arg166 is part of the active site. Residue Ser239 is the Proton donor of the active site. The active site involves Glu335.

The protein belongs to the MurB family. It depends on FAD as a cofactor.

Its subcellular location is the cytoplasm. It carries out the reaction UDP-N-acetyl-alpha-D-muramate + NADP(+) = UDP-N-acetyl-3-O-(1-carboxyvinyl)-alpha-D-glucosamine + NADPH + H(+). It functions in the pathway cell wall biogenesis; peptidoglycan biosynthesis. Cell wall formation. The protein is UDP-N-acetylenolpyruvoylglucosamine reductase of Pseudomonas savastanoi pv. phaseolicola (strain 1448A / Race 6) (Pseudomonas syringae pv. phaseolicola (strain 1448A / Race 6)).